Here is a 251-residue protein sequence, read N- to C-terminus: Zinc import ATP-binding protein ZnuC (251 aa).

Residues 5–220 (VSLENVSVSF…PEFISMFGPR (216 aa)) enclose the ABC transporter domain. 37–44 (GPNGAGKS) is a binding site for ATP.

The protein belongs to the ABC transporter superfamily. Zinc importer (TC 3.A.1.15.5) family. In terms of assembly, the complex is composed of two ATP-binding proteins (ZnuC), two transmembrane proteins (ZnuB) and a solute-binding protein (ZnuA).

It is found in the cell inner membrane. The catalysed reaction is Zn(2+)(out) + ATP(in) + H2O(in) = Zn(2+)(in) + ADP(in) + phosphate(in) + H(+)(in). In terms of biological role, part of the ABC transporter complex ZnuABC involved in zinc import. Responsible for energy coupling to the transport system. This Shigella dysenteriae serotype 1 (strain Sd197) protein is Zinc import ATP-binding protein ZnuC.